The primary structure comprises 314 residues: Ribosomal RNA small subunit methyltransferase H (314 aa).

S-adenosyl-L-methionine contacts are provided by residues 37 to 39 (GGH), aspartate 57, phenylalanine 83, aspartate 105, and glutamine 112.

It belongs to the methyltransferase superfamily. RsmH family.

The protein localises to the cytoplasm. The catalysed reaction is cytidine(1402) in 16S rRNA + S-adenosyl-L-methionine = N(4)-methylcytidine(1402) in 16S rRNA + S-adenosyl-L-homocysteine + H(+). Functionally, specifically methylates the N4 position of cytidine in position 1402 (C1402) of 16S rRNA. This chain is Ribosomal RNA small subunit methyltransferase H, found in Thioalkalivibrio sulfidiphilus (strain HL-EbGR7).